The primary structure comprises 90 residues: Putative membrane protein insertion efficiency factor (90 aa).

It belongs to the UPF0161 family.

It is found in the cell inner membrane. In terms of biological role, could be involved in insertion of integral membrane proteins into the membrane. This is Putative membrane protein insertion efficiency factor from Thermosynechococcus vestitus (strain NIES-2133 / IAM M-273 / BP-1).